We begin with the raw amino-acid sequence, 1408 residues long: TSET complex member tstA (1408 aa).

Disordered regions lie at residues 259–347 (FWPT…SIIA), 998–1055 (QQSS…AVGS), and 1091–1139 (SSSS…TNLN). The segment covering 266–308 (NNNNNNNNQQINNNNNNNNNNNNNNNNNNNNNNNNNNNNNQNN) has biased composition (low complexity). A compositionally biased stretch (polar residues) spans 309 to 318 (LINGISSMNL). Composition is skewed to low complexity over residues 319–347 (SSIT…SIIA) and 998–1051 (QQSS…ISTS).

It belongs to the TPLATE family. Component of the TSET complex, a heterohexamer composed of tstA, tstB, tstC, tstD, tstE and tstF, which may act in plasma membrane turnover. tstA, tstB, tstC and tstD are likely to be the core complex members with tstE and tstF acting as associated scaffold proteins.

The sequence is that of TSET complex member tstA from Dictyostelium discoideum (Social amoeba).